We begin with the raw amino-acid sequence, 201 residues long: Aminoglycoside N(6')-acetyltransferase type 1 (201 aa).

One can recognise an N-acetyltransferase domain in the interval 25-192 (VTLRLMTEHD…PAVYMVQTRQ (168 aa)). The substrate site is built by tryptophan 51 and aspartate 154. An acetyl-CoA-binding site is contributed by asparagine 159.

Homodimer.

The enzyme catalyses kanamycin B + acetyl-CoA = N(6')-acetylkanamycin B + CoA + H(+). In terms of biological role, catalyzes the transfer of an acetyl group from acetyl-CoA to the 6'-amino group of aminoglycoside molecules conferring resistance to antibiotics containing the purpurosamine ring including amikacin. This chain is Aminoglycoside N(6')-acetyltransferase type 1 (aacA4), found in Klebsiella pneumoniae.